A 96-amino-acid chain; its full sequence is Small ribosomal subunit protein bS18 (96 aa).

A compositionally biased stretch (basic and acidic residues) spans 1–22; that stretch reads MYKDIDSHQRDSRTDGHQDGFK. The tract at residues 1 to 25 is disordered; the sequence is MYKDIDSHQRDSRTDGHQDGFKKNP.

This sequence belongs to the bacterial ribosomal protein bS18 family. Part of the 30S ribosomal subunit. Forms a tight heterodimer with protein bS6.

Binds as a heterodimer with protein bS6 to the central domain of the 16S rRNA, where it helps stabilize the platform of the 30S subunit. This Borrelia duttonii (strain Ly) protein is Small ribosomal subunit protein bS18.